The following is a 479-amino-acid chain: Dihydrolipoyl dehydrogenase (479 aa).

FAD-binding positions include 41 to 50 (EKRGALGGTC), Lys59, Ala124, and 153 to 155 (TGS). Cys50 and Cys55 form a disulfide bridge. NAD(+)-binding positions include 190 to 197 (GGGVIGLE), Glu213, Ile247, and Gly284. Residues Asp325 and 332-335 (MLAH) contribute to the FAD site. His458 functions as the Proton acceptor in the catalytic mechanism.

This sequence belongs to the class-I pyridine nucleotide-disulfide oxidoreductase family. In terms of assembly, homodimer. FAD is required as a cofactor.

The enzyme catalyses N(6)-[(R)-dihydrolipoyl]-L-lysyl-[protein] + NAD(+) = N(6)-[(R)-lipoyl]-L-lysyl-[protein] + NADH + H(+). This chain is Dihydrolipoyl dehydrogenase, found in Trypanosoma brucei brucei.